A 211-amino-acid chain; its full sequence is Protein-L-isoaspartate O-methyltransferase 2 (211 aa).

Serine 61 is a catalytic residue.

Belongs to the methyltransferase superfamily. L-isoaspartyl/D-aspartyl protein methyltransferase family.

The protein localises to the cytoplasm. The catalysed reaction is [protein]-L-isoaspartate + S-adenosyl-L-methionine = [protein]-L-isoaspartate alpha-methyl ester + S-adenosyl-L-homocysteine. Catalyzes the methyl esterification of L-isoaspartyl residues in peptides and proteins that result from spontaneous decomposition of normal L-aspartyl and L-asparaginyl residues. It plays a role in the repair and/or degradation of damaged proteins. This Polaromonas sp. (strain JS666 / ATCC BAA-500) protein is Protein-L-isoaspartate O-methyltransferase 2.